We begin with the raw amino-acid sequence, 316 residues long: Tetrahydromethanopterin S-methyltransferase subunit H (316 aa).

It belongs to the MtrH family. The complex is composed of 8 subunits; MtrA, MtrB, MtrC, MtrD, MtrE, MtrF, MtrG and MtrH.

The enzyme catalyses 5-methyl-5,6,7,8-tetrahydromethanopterin + coenzyme M + 2 Na(+)(in) = 5,6,7,8-tetrahydromethanopterin + methyl-coenzyme M + 2 Na(+)(out). It functions in the pathway one-carbon metabolism; methanogenesis from CO(2); methyl-coenzyme M from 5,10-methylene-5,6,7,8-tetrahydromethanopterin: step 2/2. Its function is as follows. Part of a complex that catalyzes the formation of methyl-coenzyme M and tetrahydromethanopterin from coenzyme M and methyl-tetrahydromethanopterin. This is an energy-conserving, sodium-ion translocating step. MtrH catalyzes the transfer of the methyl group from methyl-tetrahydromethanopterin to the corrinoid prosthetic group of MtrA. This Methanosarcina acetivorans (strain ATCC 35395 / DSM 2834 / JCM 12185 / C2A) protein is Tetrahydromethanopterin S-methyltransferase subunit H.